A 1962-amino-acid polypeptide reads, in one-letter code: Myosin heavy chain, muscle (1962 aa).

A Myosin N-terminal SH3-like domain is found at 33-82 (DSKKSCWIPDEKEGYLLGEIKATKGDIVSVGLQGGEVRDIKSEKVEKVNP). The region spanning 86–777 (EKIEDMADMT…VLGQMEEFRD (692 aa)) is the Myosin motor domain. 179 to 186 (GESGAGKT) is a binding site for ATP. Residues 656-678 (LNSLMTTLRSTQPHFVRCIIPNE) are actin-binding. One can recognise an IQ domain in the interval 780-809 (LGKIMSWMQAWARGYLSRKGFKKLQEQRVA). The stretch at 802-1927 (KLQEQRVALK…KFRAKGRAGS (1126 aa)) forms a coiled coil. Disordered stretches follow at residues 1822–1862 (ENEL…NHER) and 1922–1962 (KGRA…ENEF).

It belongs to the TRAFAC class myosin-kinesin ATPase superfamily. Myosin family. As to quaternary structure, muscle myosin is a hexameric protein that consists of 2 heavy chain subunits (MHC), 2 alkali light chain subunits (MLC) and 2 regulatory light chain subunits (MLC-2). As to expression, expressed in larval and adult muscles. Isoforms containing exon 9a are expressed in indirect flight muscles, exons 9a and 9b are expressed in jump muscles, exons 9b and 9c are expressed in other larval and adult muscles.

It localises to the cytoplasm. The protein localises to the myofibril. Muscle contraction. This is Myosin heavy chain, muscle (Mhc) from Drosophila melanogaster (Fruit fly).